The sequence spans 303 residues: Probable phytol kinase, chloroplastic (303 aa).

The transit peptide at 1-49 (MAAAAAWTGAASPNSLLLSRSPPHAAALAPSPGSSMRRRLLLGVGTPAV) directs the protein to the chloroplast. Transmembrane regions (helical) follow at residues 98 to 118 (VVHVLSGVLFMSSWPLFSNST), 122 to 144 (YFAAVVPFLNSMRLLIYGLRLYT), 168 to 188 (YVLVLLFSVLVFWRESPIGIV), 227 to 247 (FISGFLLSAMMMLYFSSLGYI), 254 to 274 (ALGKLALVALAATVVECVPVT), and 276 to 296 (VVDDNISVPLATMLVAFLLFS).

The protein belongs to the polyprenol kinase family.

It is found in the plastid. The protein resides in the chloroplast membrane. It carries out the reaction phytol + CTP = phytyl phosphate + CDP + H(+). The protein operates within cofactor biosynthesis; tocopherol biosynthesis. Involved in the activation and reutilization of phytol from chlorophyll degradation in plant metabolism, including tocopherol biosynthesis. Catalyzes the conversion of phytol to phytol monophosphate (PMP). In Zea mays (Maize), this protein is Probable phytol kinase, chloroplastic.